The following is an 86-amino-acid chain: Weak neurotoxin 9 (86 aa).

The N-terminal stretch at 1–21 (MKTLLLTLVVVTIVCLDLGYT) is a signal peptide. Cystine bridges form between cysteine 24–cysteine 45, cysteine 27–cysteine 32, cysteine 38–cysteine 63, cysteine 67–cysteine 78, and cysteine 79–cysteine 84.

It belongs to the three-finger toxin family. Ancestral subfamily. Orphan group II sub-subfamily. As to expression, expressed by the venom gland.

It localises to the secreted. Its function is as follows. Binds with low affinity to muscular (alpha-1-beta-1-delta-epsilon/CHRNA1-CHRNB1-CHRND-CHRNE) and very low affinity to neuronal (alpha-7/CHRNA7) nicotinic acetylcholine receptor (nAChR). This is Weak neurotoxin 9 from Naja sputatrix (Malayan spitting cobra).